We begin with the raw amino-acid sequence, 208 residues long: Anti-sigma-W factor RsiW (208 aa).

Residues 1–87 (MSCPEQIVQL…ASVKRWFRTH (87 aa)) lie on the Cytoplasmic side of the membrane. Residues C3, H30, C34, and C37 each contribute to the Zn(2+) site. A helical membrane pass occupies residues 88–108 (PVIAAAAVFIILMGGGFFNSW). Residues 109–208 (HNDHNFSVSK…LDAFNPNGEE (100 aa)) are Extracellular-facing.

The protein belongs to the zinc-associated anti-sigma factor (ZAS) superfamily. Anti-sigma-W factor family. Forms a heterodimer with cognate sigma factor SigW, which probably prevents SigW from binding to DNA. The cofactor is Zn(2+). In terms of processing, is processed by successive proteolytic events. First, the extracellular region of RsiW is cleaved by PrsW (site-1 cleavage) in response to cell envelope stresses. In a reconstituted E.coli system PrsW cuts between Ala-168 and Ser-169 followed by trimming by E.coli Tsp; the endogenous extracellular exopeptidase responsible for the event in B.subtilis has not been identified. Next, it undergoes cleavage at an intramembrane site (site-2 cleavage) mediated by RasP. This cleavage uncovers a cryptic proteolytic tag with conserved alanine residues in the transmembrane segment, that is recognized mainly by the ClpXP protease, which completely degrades the protein in the cytoplasm and leads to the induction of the sigma-W-controlled genes.

Its subcellular location is the cell membrane. Its function is as follows. The anti-sigma factor for extracytoplasmic function (ECF) sigma factor sigma-W (SigW). Holds SigW, its cognate ECF sigma factor, in an inactive form until released by regulated intramembrane proteolysis (RIP). SigW and RsiW mediate cell response to cell wall stress. RIP occurs when an extracytoplasmic signal triggers a concerted proteolytic cascade to transmit information and elicit cellular responses. The membrane-spanning regulatory substrate protein is first cut periplasmically (site-1 protease, S1P, PrsW), then within the membrane itself (site-2 protease, S2P, RasP), while cytoplasmic proteases finish degrading the anti-sigma factor, liberating sigma-W. The sequence is that of Anti-sigma-W factor RsiW (rsiW) from Bacillus subtilis (strain 168).